We begin with the raw amino-acid sequence, 197 residues long: Phosphoheptose isomerase (197 aa).

An SIS domain is found at 34–196; it reads MVHCLLSGNK…DHTLFPQDEQ (163 aa). A substrate-binding site is contributed by 49–51; the sequence is NGG. Residues histidine 58 and glutamate 62 each coordinate Zn(2+). Substrate is bound by residues glutamate 62, 91–92, 117–119, serine 122, and glutamine 172; these read ND and STS. Zn(2+) is bound by residues glutamine 172 and histidine 180.

This sequence belongs to the SIS family. GmhA subfamily. As to quaternary structure, homotetramer. It depends on Zn(2+) as a cofactor.

It localises to the cytoplasm. The catalysed reaction is 2 D-sedoheptulose 7-phosphate = D-glycero-alpha-D-manno-heptose 7-phosphate + D-glycero-beta-D-manno-heptose 7-phosphate. Its pathway is carbohydrate biosynthesis; D-glycero-D-manno-heptose 7-phosphate biosynthesis; D-glycero-alpha-D-manno-heptose 7-phosphate and D-glycero-beta-D-manno-heptose 7-phosphate from sedoheptulose 7-phosphate: step 1/1. In terms of biological role, catalyzes the isomerization of sedoheptulose 7-phosphate in D-glycero-D-manno-heptose 7-phosphate. The chain is Phosphoheptose isomerase from Shewanella halifaxensis (strain HAW-EB4).